Consider the following 258-residue polypeptide: Cytosolic Fe-S cluster assembly factor Nubp2 homolog (258 aa).

ATP is bound at residue 14–21; the sequence is GKGGVGKS. [4Fe-4S] cluster contacts are provided by C188 and C191.

Belongs to the Mrp/NBP35 ATP-binding proteins family. NUBP2/CFD1 subfamily. As to quaternary structure, heterotetramer of 2 Nubp1 and 2 Nubp2 chains. [4Fe-4S] cluster serves as cofactor.

It localises to the cytoplasm. Component of the cytosolic iron-sulfur (Fe/S) protein assembly (CIA) machinery. Required for maturation of extramitochondrial Fe-S proteins. The Nubp1-Nubp2 heterotetramer forms a Fe-S scaffold complex, mediating the de novo assembly of an Fe-S cluster and its transfer to target apoproteins. The polypeptide is Cytosolic Fe-S cluster assembly factor Nubp2 homolog (Drosophila pseudoobscura pseudoobscura (Fruit fly)).